Reading from the N-terminus, the 159-residue chain is MSMRIGQGYDVHAFGEGEKIVIGGVVIPHHHGLVAHSDGDVLLHALCDALLGAVALGDIGKHFPDTDMQYRNADSRSLLRMVYAKVSQHGWKLANADMTIVAQAPRMASYIPHMVEVIASDLQSSASQINVKATTSERLGFTGREEGIACYAVVLLESR.

A divalent metal cation is bound by residues aspartate 10 and histidine 12. 4-CDP-2-C-methyl-D-erythritol 2-phosphate is bound by residues 10–12 and 36–37; these read DVH and HS. An a divalent metal cation-binding site is contributed by histidine 44. 4-CDP-2-C-methyl-D-erythritol 2-phosphate-binding positions include 58 to 60, 63 to 67, 102 to 108, 134 to 137, phenylalanine 141, and arginine 144; these read DIG, FPDTD, AQAPRMA, and TTSE.

It belongs to the IspF family. Homotrimer. It depends on a divalent metal cation as a cofactor.

It catalyses the reaction 4-CDP-2-C-methyl-D-erythritol 2-phosphate = 2-C-methyl-D-erythritol 2,4-cyclic diphosphate + CMP. Its pathway is isoprenoid biosynthesis; isopentenyl diphosphate biosynthesis via DXP pathway; isopentenyl diphosphate from 1-deoxy-D-xylulose 5-phosphate: step 4/6. Involved in the biosynthesis of isopentenyl diphosphate (IPP) and dimethylallyl diphosphate (DMAPP), two major building blocks of isoprenoid compounds. Catalyzes the conversion of 4-diphosphocytidyl-2-C-methyl-D-erythritol 2-phosphate (CDP-ME2P) to 2-C-methyl-D-erythritol 2,4-cyclodiphosphate (ME-CPP) with a corresponding release of cytidine 5-monophosphate (CMP). The sequence is that of 2-C-methyl-D-erythritol 2,4-cyclodiphosphate synthase from Cellvibrio japonicus (strain Ueda107) (Pseudomonas fluorescens subsp. cellulosa).